A 303-amino-acid polypeptide reads, in one-letter code: Probable endonuclease 4 (303 aa).

Zn(2+) is bound by residues H78, H118, E154, D188, H191, H222, D235, H237, and E267.

The protein belongs to the AP endonuclease 2 family. The cofactor is Zn(2+).

It catalyses the reaction Endonucleolytic cleavage to 5'-phosphooligonucleotide end-products.. Functionally, endonuclease IV plays a role in DNA repair. It cleaves phosphodiester bonds at apurinic or apyrimidinic (AP) sites, generating a 3'-hydroxyl group and a 5'-terminal sugar phosphate. The protein is Probable endonuclease 4 of Mycoplasmoides gallisepticum (strain R(low / passage 15 / clone 2)) (Mycoplasma gallisepticum).